We begin with the raw amino-acid sequence, 875 residues long: Alanine--tRNA ligase (875 aa).

Zn(2+)-binding residues include His-562, His-566, Cys-665, and His-669.

Belongs to the class-II aminoacyl-tRNA synthetase family. The cofactor is Zn(2+).

The protein resides in the cytoplasm. It carries out the reaction tRNA(Ala) + L-alanine + ATP = L-alanyl-tRNA(Ala) + AMP + diphosphate. Its function is as follows. Catalyzes the attachment of alanine to tRNA(Ala) in a two-step reaction: alanine is first activated by ATP to form Ala-AMP and then transferred to the acceptor end of tRNA(Ala). Also edits incorrectly charged Ser-tRNA(Ala) and Gly-tRNA(Ala) via its editing domain. This is Alanine--tRNA ligase from Saccharophagus degradans (strain 2-40 / ATCC 43961 / DSM 17024).